Here is a 608-residue protein sequence, read N- to C-terminus: UvrABC system protein C (608 aa).

Residues 16–94 enclose the GIY-YIG domain; the sequence is NRPGVYRMFD…IKEWRPPYNI (79 aa). The region spanning 204 to 239 is the UVR domain; the sequence is NALADELNVGMEQAAMRLDFEKAAELRDQVAILRRV.

Belongs to the UvrC family. As to quaternary structure, interacts with UvrB in an incision complex.

It localises to the cytoplasm. Its function is as follows. The UvrABC repair system catalyzes the recognition and processing of DNA lesions. UvrC both incises the 5' and 3' sides of the lesion. The N-terminal half is responsible for the 3' incision and the C-terminal half is responsible for the 5' incision. In Pseudomonas aeruginosa (strain ATCC 15692 / DSM 22644 / CIP 104116 / JCM 14847 / LMG 12228 / 1C / PRS 101 / PAO1), this protein is UvrABC system protein C.